Reading from the N-terminus, the 138-residue chain is ATP synthase epsilon chain (138 aa).

This sequence belongs to the ATPase epsilon chain family. F-type ATPases have 2 components, CF(1) - the catalytic core - and CF(0) - the membrane proton channel. CF(1) has five subunits: alpha(3), beta(3), gamma(1), delta(1), epsilon(1). CF(0) has three main subunits: a, b and c.

The protein localises to the cell membrane. In terms of biological role, produces ATP from ADP in the presence of a proton gradient across the membrane. The protein is ATP synthase epsilon chain (atpC) of Buchnera aphidicola subsp. Acyrthosiphon pisum (strain APS) (Acyrthosiphon pisum symbiotic bacterium).